The chain runs to 227 residues: Probable septum site-determining protein MinC (227 aa).

The protein belongs to the MinC family. Interacts with MinD and FtsZ.

Cell division inhibitor that blocks the formation of polar Z ring septums. Rapidly oscillates between the poles of the cell to destabilize FtsZ filaments that have formed before they mature into polar Z rings. Prevents FtsZ polymerization. The sequence is that of Probable septum site-determining protein MinC from Geobacillus kaustophilus (strain HTA426).